A 45-amino-acid chain; its full sequence is Bomanin Short 1 (45 aa).

The N-terminal stretch at 1–20 is a signal peptide; that stretch reads MKFFSVVTVFVLGLLAVANA. The propeptide at 21-27 is removed by a dipeptidylpeptidase; sequence VPLSPDP. Residues Cys36 and Cys39 are joined by a disulfide bond. Gly43 carries the glycine amide modification.

As to expression, hemolymph (at protein level).

It localises to the secreted. Secreted immune-induced peptide induced by Toll signaling. Has a role in resistance to bacterial and fungal infections. Has no activity against the fungus C.glabrata in vitro. The protein is Bomanin Short 1 of Drosophila melanogaster (Fruit fly).